Here is a 475-residue protein sequence, read N- to C-terminus: Aspartyl/glutamyl-tRNA(Asn/Gln) amidotransferase subunit B (475 aa).

It belongs to the GatB/GatE family. GatB subfamily. In terms of assembly, heterotrimer of A, B and C subunits.

The catalysed reaction is L-glutamyl-tRNA(Gln) + L-glutamine + ATP + H2O = L-glutaminyl-tRNA(Gln) + L-glutamate + ADP + phosphate + H(+). It catalyses the reaction L-aspartyl-tRNA(Asn) + L-glutamine + ATP + H2O = L-asparaginyl-tRNA(Asn) + L-glutamate + ADP + phosphate + 2 H(+). Functionally, allows the formation of correctly charged Asn-tRNA(Asn) or Gln-tRNA(Gln) through the transamidation of misacylated Asp-tRNA(Asn) or Glu-tRNA(Gln) in organisms which lack either or both of asparaginyl-tRNA or glutaminyl-tRNA synthetases. The reaction takes place in the presence of glutamine and ATP through an activated phospho-Asp-tRNA(Asn) or phospho-Glu-tRNA(Gln). In Chlorobium chlorochromatii (strain CaD3), this protein is Aspartyl/glutamyl-tRNA(Asn/Gln) amidotransferase subunit B.